Reading from the N-terminus, the 210-residue chain is CLAVATA3/ESR (CLE)-related protein 4D (210 aa).

Positions 1–21 are cleaved as a signal peptide; it reads MAKNAMLCLLILSVVLALAFA. Positions 21-83 are required for secretion from the host cytoplasm to the host apoplasm; it reads ATNKKDDEEP…SNQLPNNNWM (63 aa). Residues asparagine 32 and asparagine 59 are each glycosylated (N-linked (GlcNAc...) asparagine). Residues 115–210 are disordered; it reads RRKTGTHSQR…APAGPDPIHH (96 aa). Basic and acidic residues-rich tracts occupy residues 125-137, 144-158, 165-179, and 186-200; these read HHEETTLEQEKRG, PIHHQDTTFEQEKRG, PIHHQDTTLEQEKRV, and PIHHQDTKFEQEKRG. An A-1 repeat occupies 127–135; the sequence is EETTLEQEK. Residues 129 to 198 form a 4 X approximate repeat A region; that stretch reads TTLEQEKRGA…HQDTKFEQEK (70 aa). One copy of the CLE-1 repeat lies at 136–147; sequence RGAPAGPDPIHH. A 4 X approximate repeat CLE region spans residues 136–210; the sequence is RGAPAGPDPI…APAGPDPIHH (75 aa). An A-2 repeat occupies 148–156; the sequence is QDTTFEQEK. A CLE-2 repeat occupies 157 to 168; sequence RGAPAGPDPIHH. An A-3 repeat occupies 169-177; the sequence is QDTTLEQEK. The CLE-3 repeat unit spans residues 178-189; sequence RVAGAGPDPIHH. An A-4 repeat occupies 190 to 198; the sequence is QDTKFEQEK. The CLE-4 repeat unit spans residues 199–210; that stretch reads RGAPAGPDPIHH.

Belongs to the CLV3/ESR signal peptide family. Highly expressed exclusively within the dorsal esophageal gland cell during syncytium formation in host plants.

Its subcellular location is the secreted. The protein localises to the host cytoplasm. The protein resides in the host extracellular space. It localises to the extracellular space. It is found in the apoplast. Functionally, mimics host plant CLE extracellular signal peptides that regulate cell fate. May play a role in the differentiation or division of feeding cells (syncytia) induced in plant roots during infection. This chain is CLAVATA3/ESR (CLE)-related protein 4D (CLE-4D), found in Globodera rostochiensis (Golden nematode worm).